A 182-amino-acid polypeptide reads, in one-letter code: Large ribosomal subunit protein uL6 (182 aa).

Belongs to the universal ribosomal protein uL6 family. In terms of assembly, part of the 50S ribosomal subunit.

In terms of biological role, this protein binds to the 23S rRNA, and is important in its secondary structure. It is located near the subunit interface in the base of the L7/L12 stalk, and near the tRNA binding site of the peptidyltransferase center. This Desulforamulus reducens (strain ATCC BAA-1160 / DSM 100696 / MI-1) (Desulfotomaculum reducens) protein is Large ribosomal subunit protein uL6.